Here is a 290-residue protein sequence, read N- to C-terminus: Protease HtpX (290 aa).

The next 2 membrane-spanning stretches (helical) occupy residues 6–26 (LFLV…NILF) and 36–56 (ISGL…ISLL). Position 143 (His143) interacts with Zn(2+). Glu144 is a catalytic residue. His147 lines the Zn(2+) pocket. 2 helical membrane passes run 158–178 (LIQG…AGVI) and 200–220 (ITVF…VMWF). Glu225 provides a ligand contact to Zn(2+).

Belongs to the peptidase M48B family. Zn(2+) serves as cofactor.

Its subcellular location is the cell inner membrane. The sequence is that of Protease HtpX from Aeromonas salmonicida (strain A449).